The sequence spans 174 residues: Major allergen Can f 1 (174 aa).

The first 18 residues, 1–18 (MKTLLLTIGFSLIAILQA), serve as a signal peptide directing secretion. Cys-78 and Cys-169 are joined by a disulfide. Asn-80 carries an N-linked (GlcNAc...) asparagine glycan.

It belongs to the calycin superfamily. Lipocalin family. As to expression, tongue epithelial tissue.

It is found in the secreted. This is Major allergen Can f 1 from Canis lupus familiaris (Dog).